The chain runs to 1941 residues: WD repeat-containing protein 81 (1941 aa).

The tract at residues 1–27 (MAQGSGGREGALRTPAGGWHSPPSPDM) is disordered. Residues 1–650 (MAQGSGGREG…TPCEASWTRD (650 aa)) are necessary and sufficient for the interaction with SQSTM1. The BEACH domain maps to 337 to 614 (GQPTGQEELR…IPKLLVQTIQ (278 aa)). Disordered regions lie at residues 618 to 637 (GRED…GRPV), 694 to 718 (VASA…EEGR), 1022 to 1074 (SKDL…VSFH), 1097 to 1217 (PQEA…EGKE), 1523 to 1556 (PSSR…DGHS), and 1569 to 1602 (QIPN…DNAL). Positions 1137–1146 (LRSGDSSQDL) are enriched in polar residues. Residues 1151 to 1174 (GSEEEEEEEDSCVVLEEEEGEQEE) are compositionally biased toward acidic residues. The segment covering 1586–1595 (SGVGGGGLGS) has biased composition (gly residues). WD repeat units lie at residues 1639 to 1677 (IRLQ…LWPL), 1686 to 1724 (ETAP…VWDP), 1729 to 1769 (TLRT…FVDC), 1777 to 1815 (EFRL…LLDT), 1819 to 1856 (LVLR…VWKE), 1860 to 1896 (KPTH…VCSL), and 1902 to 1941 (QATT…RLLA).

Belongs to the WD repeat WDR81 family. As to quaternary structure, interacts with WDR91; involved in early to late endosome cargo transport. Interacts with BECN1; negatively regulates the PI3 kinase/PI3K activity associated with endosomal membranes. Interacts with SQSTM1; the interaction is direct and regulates the interaction of SQSTM1 with ubiquitinated proteins. Interacts with MAP1LC3C; recruits MAP1LC3C to ubiquitinated protein aggregates in the aggrephagy process. As to expression, widely expressed. In the brain, highest levels in cerebellum and corpus callosum.

It is found in the early endosome membrane. The protein resides in the late endosome membrane. The protein localises to the lysosome membrane. Its subcellular location is the cytoplasmic vesicle. It localises to the autophagosome membrane. It is found in the mitochondrion. The protein resides in the cytoplasm. The protein localises to the cytosol. Its function is as follows. Functions as a negative regulator of the PI3 kinase/PI3K activity associated with endosomal membranes via BECN1, a core subunit of the PI3K complex. By modifying the phosphatidylinositol 3-phosphate/PtdInsP3 content of endosomal membranes may regulate endosome fusion, recycling, sorting and early to late endosome transport. It is for instance, required for the delivery of cargos like BST2/tetherin from early to late endosome and thereby participates indirectly to their degradation by the lysosome. May also play a role in aggrephagy, the macroautophagic degradation of ubiquitinated protein aggregates. In this process, may regulate the interaction of SQSTM1 with ubiquitinated proteins and also recruit MAP1LC3C. May also be involved in maintenance of normal mitochondrial structure and organization. In Homo sapiens (Human), this protein is WD repeat-containing protein 81.